The sequence spans 61 residues: ADDRNPLEQCFRETDYEEFLEIARNNLKATSNPKHVVIVGAGMAGLSAAYVLSGGGHQVTV.

FAD is bound at residue 43–44 (MA).

The protein belongs to the flavin monoamine oxidase family. FIG1 subfamily. In terms of assembly, homodimer; non-covalently linked. Requires FAD as cofactor. Post-translationally, N-glycosylated. Expressed by the venom gland.

It localises to the secreted. The catalysed reaction is an L-alpha-amino acid + O2 + H2O = a 2-oxocarboxylate + H2O2 + NH4(+). It catalyses the reaction L-leucine + O2 + H2O = 4-methyl-2-oxopentanoate + H2O2 + NH4(+). Functionally, catalyzes an oxidative deamination of predominantly hydrophobic and aromatic L-amino acids, thus producing hydrogen peroxide that may contribute to the diverse toxic effects of this enzyme. Shows activity on L-Leu. Exhibits diverse biological activities, such as apoptosis, antibacterial activities against both Gram-negative and Gram-positive bacteria and antiparasitic activities, as well as induction of platelet aggregation. Effects of snake L-amino oxidases on platelets are controversial, since they either induce aggregation or inhibit agonist-induced aggregation. These different effects are probably due to different experimental conditions. This protein may also induce hemorrhage, hemolysis, and edema. This is L-amino-acid oxidase from Crotalus durissus cascavella (Northeastern Brazilian rattlesnake).